The primary structure comprises 237 residues: Probable septum site-determining protein MinC (237 aa).

The protein belongs to the MinC family. Interacts with MinD and FtsZ.

Functionally, cell division inhibitor that blocks the formation of polar Z ring septums. Rapidly oscillates between the poles of the cell to destabilize FtsZ filaments that have formed before they mature into polar Z rings. Prevents FtsZ polymerization. The protein is Probable septum site-determining protein MinC of Neisseria gonorrhoeae.